Here is a 289-residue protein sequence, read N- to C-terminus: Syntaxin-3 (289 aa).

At 1 to 263 (MKDRLEQLKA…VKYQSQARKK (263 aa)) the chain is on the cytoplasmic side. The stretch at 32-111 (MDEFFSEIEE…IEEDEVRSSA (80 aa)) forms a coiled coil. In terms of domain architecture, t-SNARE coiled-coil homology spans 191–253 (LSEIEGRHKD…EKARDETKKA (63 aa)). The chain crosses the membrane as a helical; Anchor for type IV membrane protein span at residues 264–284 (LIIIIVLVVVLLGILALIIGL). Over 285 to 289 (SVGLN) the chain is Extracellular.

The protein belongs to the syntaxin family. As to quaternary structure, interacts with REEP6. Interacts with PRPH2 in rod and cone photoreceptors. Interacts with ROM1. Interacts with SNAP25. Interacts with VAMP2. Interacts with IPO5. Expressed in small intestine, kidney, pancreas, placenta as well as in retina. Weaker expression in lung, liver and heart. Not expressed in brain and skeletal muscle. As to expression, expressed only in the retina. In terms of tissue distribution, ubiquitously expressed.

The protein localises to the apical cell membrane. It is found in the nucleus. Functionally, potentially involved in docking of synaptic vesicles at presynaptic active zones. Apical receptor involved in membrane fusion of apical vesicles. In terms of biological role, essential for survival of retinal photoreceetors. Its function is as follows. Functions as a regulator of gene expression. This Homo sapiens (Human) protein is Syntaxin-3 (STX3).